We begin with the raw amino-acid sequence, 291 residues long: Alpha-soluble NSF attachment protein (291 aa).

TPR repeat units follow at residues 14 to 51, 77 to 110, 117 to 150, and 157 to 190; these read ADKR…FKMS, AASS…YTDE, AKHQ…FDGE, and HQCL…SLDN.

It belongs to the SNAP family. As to quaternary structure, interacts with nsfA and probably SNARE proteins.

The protein localises to the cytoplasmic vesicle membrane. May be required for vesicular transport between the endoplasmic reticulum and the Golgi apparatus. Involved in vesicle fusion with nsfA and probably SNARE proteins. This Dictyostelium discoideum (Social amoeba) protein is Alpha-soluble NSF attachment protein (snpA).